The sequence spans 227 residues: Adenosylcobinamide-GDP ribazoletransferase (227 aa).

5 helical membrane passes run 3 to 23, 26 to 46, 95 to 115, 117 to 137, and 165 to 185; these read CLKA…ELDF, IWAT…AVYF, GVGG…ARPE, WLDY…VAAY, and AVAA…SLFF.

Belongs to the CobS family. It depends on Mg(2+) as a cofactor.

The protein localises to the cell membrane. The catalysed reaction is alpha-ribazole + adenosylcob(III)inamide-GDP = adenosylcob(III)alamin + GMP + H(+). It carries out the reaction alpha-ribazole 5'-phosphate + adenosylcob(III)inamide-GDP = adenosylcob(III)alamin 5'-phosphate + GMP + H(+). It functions in the pathway cofactor biosynthesis; adenosylcobalamin biosynthesis; adenosylcobalamin from cob(II)yrinate a,c-diamide: step 7/7. Its function is as follows. Joins adenosylcobinamide-GDP and alpha-ribazole to generate adenosylcobalamin (Ado-cobalamin). Also synthesizes adenosylcobalamin 5'-phosphate from adenosylcobinamide-GDP and alpha-ribazole 5'-phosphate. The polypeptide is Adenosylcobinamide-GDP ribazoletransferase (Pyrobaculum islandicum (strain DSM 4184 / JCM 9189 / GEO3)).